Reading from the N-terminus, the 435-residue chain is GTPase Der (435 aa).

EngA-type G domains follow at residues Pro-4–Asp-167 and Ile-175–Thr-350. GTP is bound by residues Gly-10–Ser-17, Asp-57–Ile-61, Asn-119–Asp-122, Gly-181–Ser-188, Asp-228–Ile-232, and Asn-293–Asp-296. Residues Arg-351–Lys-435 form the KH-like domain.

It belongs to the TRAFAC class TrmE-Era-EngA-EngB-Septin-like GTPase superfamily. EngA (Der) GTPase family. In terms of assembly, associates with the 50S ribosomal subunit.

GTPase that plays an essential role in the late steps of ribosome biogenesis. This chain is GTPase Der, found in Lacticaseibacillus paracasei (strain ATCC 334 / BCRC 17002 / CCUG 31169 / CIP 107868 / KCTC 3260 / NRRL B-441) (Lactobacillus paracasei).